A 227-amino-acid polypeptide reads, in one-letter code: ATP-dependent Clp protease proteolytic subunit (227 aa).

The active-site Nucleophile is the serine 123. Histidine 148 is a catalytic residue.

It belongs to the peptidase S14 family. As to quaternary structure, fourteen ClpP subunits assemble into 2 heptameric rings which stack back to back to give a disk-like structure with a central cavity, resembling the structure of eukaryotic proteasomes.

The protein resides in the cytoplasm. It carries out the reaction Hydrolysis of proteins to small peptides in the presence of ATP and magnesium. alpha-casein is the usual test substrate. In the absence of ATP, only oligopeptides shorter than five residues are hydrolyzed (such as succinyl-Leu-Tyr-|-NHMec, and Leu-Tyr-Leu-|-Tyr-Trp, in which cleavage of the -Tyr-|-Leu- and -Tyr-|-Trp bonds also occurs).. Functionally, cleaves peptides in various proteins in a process that requires ATP hydrolysis. Has a chymotrypsin-like activity. Plays a major role in the degradation of misfolded proteins. This is ATP-dependent Clp protease proteolytic subunit from Chlorobium phaeobacteroides (strain DSM 266 / SMG 266 / 2430).